We begin with the raw amino-acid sequence, 281 residues long: Ribosomal RNA small subunit methyltransferase A (281 aa).

Asn18, Leu20, Gly45, Glu66, Asp91, and Asn118 together coordinate S-adenosyl-L-methionine.

It belongs to the class I-like SAM-binding methyltransferase superfamily. rRNA adenine N(6)-methyltransferase family. RsmA subfamily.

The protein localises to the cytoplasm. The catalysed reaction is adenosine(1518)/adenosine(1519) in 16S rRNA + 4 S-adenosyl-L-methionine = N(6)-dimethyladenosine(1518)/N(6)-dimethyladenosine(1519) in 16S rRNA + 4 S-adenosyl-L-homocysteine + 4 H(+). In terms of biological role, specifically dimethylates two adjacent adenosines (A1518 and A1519) in the loop of a conserved hairpin near the 3'-end of 16S rRNA in the 30S particle. May play a critical role in biogenesis of 30S subunits. The chain is Ribosomal RNA small subunit methyltransferase A from Histophilus somni (strain 129Pt) (Haemophilus somnus).